The sequence spans 527 residues: MGKFHSFVNVVALSLSLSGRVFGAIGPVTDLTISNADVTPDGITRAAVLAGGVFPGPLITGNKGDEFQINVIDNLTNETMLKSTTIHWHGIFQAGTNWADGAAFVNQCPIATGNSFLYDFTVPDQAGTFWYHSHLSTQYCDGLRGPLVVYDPDDANASLYDVDDDTTVITLADWYHTAAKLGPAFPAGPDSVLINGLGRFSGDGGGATNLTVITVTQGKRYRFRLVSISCDPNFTFSIDGHNMTIIEVGGVNHEALDVDSIQIFAGQRYSFILNANQSIDNYWIRAIPNTGTTDTTGGVNSAILRYDTAEEIEPTTNATTSVIPLTETDLVPLDNPAAPGDPQVGGVDLAMSLDFSFNGSNFFINNETFVPPTVPVLLQILSGAQDAASLLPNGSVYTLPSNSTIEISFPIITTDGALNAPGAPHPFHLHGHTFSVVRSAGSSTFNYANPVRRDTVSTGNSGDNVTIRFTTDNPGPWFLHCHIDFHLDAGFAIVFAEDTADTASANPVPTAWSDLCPTYDALDSSDL.

A signal peptide spans 1–23; it reads MGKFHSFVNVVALSLSLSGRVFG. One can recognise a Plastocyanin-like 1 domain in the interval 25-150; it reads IGPVTDLTIS…DGLRGPLVVY (126 aa). Asn-74 and Asn-77 each carry an N-linked (GlcNAc...) asparagine glycan. Cu cation is bound by residues His-87, His-89, His-132, and His-134. Disulfide bonds link Cys-108-Cys-516 and Cys-140-Cys-230. N-linked (GlcNAc...) asparagine glycans are attached at residues Asn-156, Asn-209, Asn-233, Asn-242, Asn-276, Asn-317, Asn-358, Asn-366, Asn-393, and Asn-402. Positions 162–306 constitute a Plastocyanin-like 2 domain; that stretch reads VDDDTTVITL…GGVNSAILRY (145 aa). Positions 373–498 constitute a Plastocyanin-like 3 domain; the sequence is TVPVLLQILS…AGFAIVFAED (126 aa). Cu cation contacts are provided by His-425, His-428, His-430, His-480, Cys-481, His-482, and His-486.

It belongs to the multicopper oxidase family. Cu cation serves as cofactor.

It localises to the secreted. It catalyses the reaction 4 hydroquinone + O2 = 4 benzosemiquinone + 2 H2O. Functionally, lignin degradation and detoxification of lignin-derived products. This is Laccase-5 (LCC5) from Trametes versicolor (White-rot fungus).